Consider the following 438-residue polypeptide: Coenzyme A disulfide reductase (438 aa).

8-33 (GAVAGGATCASQIRRLDKESDIIIFE) is an FAD binding site. Positions 15, 19, 22, 39, and 42 each coordinate substrate. Cysteine 43 functions as the Nucleophile in the catalytic mechanism. The Redox-active role is filled by cysteine 43. Lysine 71 contacts substrate. Position 151-166 (151-166 (VLVVGAGYVSLEVLEN)) interacts with NADP(+). Residue 267–277 (TNVPNIYAIGD) participates in FAD binding. Histidine 299 is a binding site for substrate. Residue tyrosine 419 coordinates FAD. Lysine 427 serves as a coordination point for substrate.

This sequence belongs to the class-III pyridine nucleotide-disulfide oxidoreductase family. Homodimer. Requires FAD as cofactor.

It carries out the reaction NADP(+) + 2 CoA = CoA-disulfide + NADPH + H(+). Functionally, catalyzes specifically the NADPH-dependent reduction of coenzyme A disulfide. The polypeptide is Coenzyme A disulfide reductase (Staphylococcus aureus (strain bovine RF122 / ET3-1)).